The sequence spans 579 residues: Nuclear hormone receptor family member nhr-47 (579 aa).

The nuclear receptor DNA-binding region spans 8–83 (GTLCAVCDDI…VGMDKNSIQN (76 aa)). 2 consecutive NR C4-type zinc fingers follow at residues 11-31 (CAVC…CNGC) and 47-71 (CQGN…LQKC). Positions 87–128 (RIGYTKRKRRHDDNDMEGGVHHSEHIRDGSSGSPQMNDESPE) are disordered. Over residues 104-114 (GGVHHSEHIRD) the composition is skewed to basic and acidic residues. One can recognise an NR LBD domain in the interval 164 to 553 (ADLHSYATLE…SLVKETSLGP (390 aa)).

The protein belongs to the nuclear hormone receptor family.

The protein resides in the nucleus. Functionally, orphan nuclear receptor. The protein is Nuclear hormone receptor family member nhr-47 (nhr-47) of Caenorhabditis elegans.